The chain runs to 175 residues: ATP-dependent protease subunit HslV (175 aa).

Thr2 is a catalytic residue. Residues Ala156, Cys159, and Thr162 each coordinate Na(+).

It belongs to the peptidase T1B family. HslV subfamily. In terms of assembly, a double ring-shaped homohexamer of HslV is capped on each side by a ring-shaped HslU homohexamer. The assembly of the HslU/HslV complex is dependent on binding of ATP.

It localises to the cytoplasm. The enzyme catalyses ATP-dependent cleavage of peptide bonds with broad specificity.. Its activity is regulated as follows. Allosterically activated by HslU binding. Protease subunit of a proteasome-like degradation complex believed to be a general protein degrading machinery. The sequence is that of ATP-dependent protease subunit HslV from Rhizobium etli (strain ATCC 51251 / DSM 11541 / JCM 21823 / NBRC 15573 / CFN 42).